We begin with the raw amino-acid sequence, 658 residues long: Trimethylamine N-oxide transport system permease protein TmoV (658 aa).

Helical transmembrane passes span 20–40 (LGLA…AGLL), 103–123 (IGPI…YYLG), 127–147 (MALL…WDIA), 153–173 (VLVV…ISAW), 185–205 (VLAV…VIFF), 212–232 (GAVA…TLGL), 273–293 (VIML…PGLG), 300–320 (MGSF…LLAV), 349–369 (FLLM…VVPI), 420–440 (FMLS…ALLV), 447–467 (VLAA…RSVI), 469–489 (LYSV…IGVV), 517–537 (IPAI…ILIF), 585–605 (AVGF…AAFI), and 627–647 (FVLG…IMKW). The region spanning 147 to 326 (AMQTMSVLVV…LLAVTLDRMS (180 aa)) is the ABC transmembrane type-1 1 domain. The ABC transmembrane type-1 2 domain maps to 465-644 (SVITLYSVLA…LMALTFDMVI (180 aa)).

The protein belongs to the binding-protein-dependent transport system permease family. The complex is probably composed of two ATP-binding proteins (TmoW), two transmembrane proteins (TmoV) and a solute-binding protein (TmoX).

It localises to the cell inner membrane. Part of the ABC transporter complex TmoXWV involved in trimethylamine N-oxide (TMAO) import. Responsible for the translocation of the substrate across the membrane. Is specific for TMAO and essential for TMAO metabolism. The chain is Trimethylamine N-oxide transport system permease protein TmoV from Ruegeria pomeroyi (strain ATCC 700808 / DSM 15171 / DSS-3) (Silicibacter pomeroyi).